A 468-amino-acid chain; its full sequence is V-type proton ATPase subunit S1 (468 aa).

Positions 1 to 35 (MMAATAAAQVRAGTRWAPALCRMPWLPLMLVAAAA) are cleaved as a signal peptide. Residues 36-228 (ATSEQQVPLV…TAVRPSRVAR (193 aa)) constitute a propeptide that is removed on maturation. The Lumenal portion of the chain corresponds to 36 to 417 (ATSEQQVPLV…KKFSYASDCA (382 aa)). Residues Asn-167, Asn-258, Asn-271, Asn-294, Asn-301, Asn-348, Asn-355, and Asn-404 are each glycosylated (N-linked (GlcNAc...) asparagine). A disulfide bridge links Cys-369 with Cys-416. The chain crosses the membrane as a helical span at residues 418–438 (GFFSPGIWMGLLTSLFMLFIF). At 439-468 (TYGLHMILSLKTMDRFDDHKGPTITLTQIV) the chain is on the cytoplasmic side.

The protein belongs to the vacuolar ATPase subunit S1 family. As to quaternary structure, accessory component of the multisubunit proton-transporting vacuolar (V)-ATPase protein pump. Interacts (via N-terminus) with ATP6AP2 (via N-terminus). Interacts with RNASEK. Interacts with TMEM106B (via C-terminus). Post-translationally, N-glycosylated.

It localises to the endoplasmic reticulum membrane. Its subcellular location is the endoplasmic reticulum-Golgi intermediate compartment membrane. The protein resides in the cytoplasmic vesicle. It is found in the secretory vesicle. The protein localises to the synaptic vesicle membrane. It localises to the clathrin-coated vesicle membrane. Functionally, accessory subunit of the proton-transporting vacuolar (V)-ATPase protein pump, which is required for luminal acidification of secretory vesicles. Guides the V-type ATPase into specialized subcellular compartments, such as neuroendocrine regulated secretory vesicles or the ruffled border of the osteoclast, thereby regulating its activity. Involved in membrane trafficking and Ca(2+)-dependent membrane fusion. May play a role in the assembly of the V-type ATPase complex. In aerobic conditions, involved in intracellular iron homeostasis, thus triggering the activity of Fe(2+) prolyl hydroxylase (PHD) enzymes, and leading to HIF1A hydroxylation and subsequent proteasomal degradation. In islets of Langerhans cells, may regulate the acidification of dense-core secretory granules. The sequence is that of V-type proton ATPase subunit S1 (ATP6AP1) from Bos taurus (Bovine).